Here is a 466-residue protein sequence, read N- to C-terminus: Glutamate--tRNA ligase 2 (466 aa).

The short motif at 9–19 is the 'HIGH' region element; the sequence is PSPTGYLHVGG. A 'KMSKS' region motif is present at residues 234-238; it reads PLSKR. ATP is bound at residue Lys-237.

Belongs to the class-I aminoacyl-tRNA synthetase family. Glutamate--tRNA ligase type 1 subfamily. As to quaternary structure, monomer.

The protein localises to the cytoplasm. It carries out the reaction tRNA(Glu) + L-glutamate + ATP = L-glutamyl-tRNA(Glu) + AMP + diphosphate. Catalyzes the attachment of glutamate to tRNA(Glu) in a two-step reaction: glutamate is first activated by ATP to form Glu-AMP and then transferred to the acceptor end of tRNA(Glu). The sequence is that of Glutamate--tRNA ligase 2 from Pseudothermotoga lettingae (strain ATCC BAA-301 / DSM 14385 / NBRC 107922 / TMO) (Thermotoga lettingae).